Consider the following 505-residue polypeptide: 2,3-bisphosphoglycerate-independent phosphoglycerate mutase (505 aa).

2 residues coordinate Mn(2+): D11 and S61. S61 serves as the catalytic Phosphoserine intermediate. Substrate contacts are provided by residues H122, 152 to 153 (RD), R183, R189, 259 to 262 (RTDR), and K332. Mn(2+) is bound by residues D399, H403, D440, H441, and H458.

This sequence belongs to the BPG-independent phosphoglycerate mutase family. As to quaternary structure, monomer. Requires Mn(2+) as cofactor.

The enzyme catalyses (2R)-2-phosphoglycerate = (2R)-3-phosphoglycerate. It participates in carbohydrate degradation; glycolysis; pyruvate from D-glyceraldehyde 3-phosphate: step 3/5. Functionally, catalyzes the interconversion of 2-phosphoglycerate and 3-phosphoglycerate. The polypeptide is 2,3-bisphosphoglycerate-independent phosphoglycerate mutase (Flavobacterium johnsoniae (strain ATCC 17061 / DSM 2064 / JCM 8514 / BCRC 14874 / CCUG 350202 / NBRC 14942 / NCIMB 11054 / UW101) (Cytophaga johnsonae)).